The primary structure comprises 90 residues: Nodulation protein F (90 aa).

The region spanning 4-89 (QLESEIIGII…RHSGSHPRLA (86 aa)) is the Carrier domain. Residue Ser46 is modified to O-(pantetheine 4'-phosphoryl)serine. Residues 65–90 (RDEHGRGVVGSPERRRHSGSHPRLAH) form a disordered region. Residues 78-90 (RRRHSGSHPRLAH) are compositionally biased toward basic residues.

Post-translationally, 4'-phosphopantetheine is transferred from CoA to a specific serine of apo-NodF.

Proposed to synthesize nod factor fatty acyl chain. Involved in trans-2,trans-4,trans-6,cis-11-octadecatetraenoic acid biosynthesis. The chain is Nodulation protein F (nodF) from Rhizobium meliloti (Ensifer meliloti).